The sequence spans 247 residues: T-cell surface glycoprotein CD8 alpha chain (247 aa).

Residues 1–27 form the signal peptide; that stretch reads MASPLTRFLSLNLLLLGESIILGSGEA. The Ig-like V-type domain maps to 28–139; the sequence is KPQAPELRIF…SVISNSVMYF (112 aa). The Extracellular portion of the chain corresponds to 28 to 196; it reads KPQAPELRIF…TGLDFACDIY (169 aa). An intrachain disulfide couples C53 to C129. 3 N-linked (GlcNAc...) asparagine glycosylation sites follow: N69, N97, and N150. The tract at residues 156 to 182 is disordered; it reads PVLRTPSPVHPTGTSQPQRPEDCRPRG. A helical transmembrane segment spans residues 197-217; sequence IWAPLAGICVALLLSLIITLI. The Cytoplasmic segment spans residues 218-247; the sequence is CYHRSRKRVCKCPRPLVRQEGKPRPSEKIV.

As to quaternary structure, forms disulfide-linked heterodimers with CD8B at the cell surface. Also forms homodimers in several cell types including NK-cells or peripheral blood T-lymphocytes. Interacts with the MHC class I HLA-A/B2M dimer. Interacts with LCK in a zinc-dependent manner. In terms of processing, palmitoylated, but association with CD8B seems to be more important for the enrichment of CdD8A in lipid rafts. Phosphorylated in cytotoxic T-lymphocytes (CTLs) following activation.

It is found in the cell membrane. Integral membrane glycoprotein that plays an essential role in the immune response and serves multiple functions in responses against both external and internal offenses. In T-cells, functions primarily as a coreceptor for MHC class I molecule:peptide complex. The antigens presented by class I peptides are derived from cytosolic proteins while class II derived from extracellular proteins. Interacts simultaneously with the T-cell receptor (TCR) and the MHC class I proteins presented by antigen presenting cells (APCs). In turn, recruits the Src kinase LCK to the vicinity of the TCR-CD3 complex. LCK then initiates different intracellular signaling pathways by phosphorylating various substrates ultimately leading to lymphokine production, motility, adhesion and activation of cytotoxic T-lymphocytes (CTLs). This mechanism enables CTLs to recognize and eliminate infected cells and tumor cells. In NK-cells, the presence of CD8A homodimers at the cell surface provides a survival mechanism allowing conjugation and lysis of multiple target cells. CD8A homodimer molecules also promote the survival and differentiation of activated lymphocytes into memory CD8 T-cells. The polypeptide is T-cell surface glycoprotein CD8 alpha chain (Cd8a) (Mus musculus (Mouse)).